Here is a 68-residue protein sequence, read N- to C-terminus: Large ribosomal subunit protein bL31 (68 aa).

Zn(2+) contacts are provided by cysteine 16, cysteine 18, cysteine 36, and cysteine 39.

It belongs to the bacterial ribosomal protein bL31 family. Type A subfamily. As to quaternary structure, part of the 50S ribosomal subunit. Requires Zn(2+) as cofactor.

Binds the 23S rRNA. The sequence is that of Large ribosomal subunit protein bL31 from Dictyoglomus turgidum (strain DSM 6724 / Z-1310).